Here is a 476-residue protein sequence, read N- to C-terminus: Bifunctional protein HldE (476 aa).

The tract at residues 1-318 is ribokinase; that stretch reads MKPVLPDYSK…AEAVHGSKDT (318 aa). 195 to 198 serves as a coordination point for ATP; sequence NMSE. Residue D264 is part of the active site. A cytidylyltransferase region spans residues 344 to 476; it reads MTNGCFDILH…IIEAIKGGRG (133 aa).

In the N-terminal section; belongs to the carbohydrate kinase PfkB family. It in the C-terminal section; belongs to the cytidylyltransferase family. As to quaternary structure, homodimer.

The catalysed reaction is D-glycero-beta-D-manno-heptose 7-phosphate + ATP = D-glycero-beta-D-manno-heptose 1,7-bisphosphate + ADP + H(+). The enzyme catalyses D-glycero-beta-D-manno-heptose 1-phosphate + ATP + H(+) = ADP-D-glycero-beta-D-manno-heptose + diphosphate. It participates in nucleotide-sugar biosynthesis; ADP-L-glycero-beta-D-manno-heptose biosynthesis; ADP-L-glycero-beta-D-manno-heptose from D-glycero-beta-D-manno-heptose 7-phosphate: step 1/4. It functions in the pathway nucleotide-sugar biosynthesis; ADP-L-glycero-beta-D-manno-heptose biosynthesis; ADP-L-glycero-beta-D-manno-heptose from D-glycero-beta-D-manno-heptose 7-phosphate: step 3/4. In terms of biological role, catalyzes the phosphorylation of D-glycero-D-manno-heptose 7-phosphate at the C-1 position to selectively form D-glycero-beta-D-manno-heptose-1,7-bisphosphate. Catalyzes the ADP transfer from ATP to D-glycero-beta-D-manno-heptose 1-phosphate, yielding ADP-D-glycero-beta-D-manno-heptose. The polypeptide is Bifunctional protein HldE (Vibrio cholerae serotype O1 (strain M66-2)).